A 122-amino-acid chain; its full sequence is Large ribosomal subunit protein uL14 (122 aa).

The protein belongs to the universal ribosomal protein uL14 family. Part of the 50S ribosomal subunit. Forms a cluster with proteins L3 and L19. In the 70S ribosome, L14 and L19 interact and together make contacts with the 16S rRNA in bridges B5 and B8.

Functionally, binds to 23S rRNA. Forms part of two intersubunit bridges in the 70S ribosome. In Thermotoga maritima (strain ATCC 43589 / DSM 3109 / JCM 10099 / NBRC 100826 / MSB8), this protein is Large ribosomal subunit protein uL14.